The chain runs to 37 residues: Delta-amaurobitoxin-Pl1b (37 aa).

Disulfide bonds link Cys-2-Cys-18, Cys-9-Cys-23, Cys-17-Cys-33, and Cys-25-Cys-31. Ser-37 bears the Serine amide mark.

Belongs to the neurotoxin 07 (Beta/delta-agtx) family. 02 (aga-3) subfamily. In terms of tissue distribution, expressed by the venom gland.

The protein resides in the secreted. In terms of biological role, insecticidal toxin. Binds to site 4 of insect voltage-gated sodium channel (Nav) and inhibits channel inactivation. In vivo, it lethal to lepidopteran larvae. Has no adverse affects when intracerebroventricularly injected in mice at a dose of 0.2 ug, but causes reversible paralysis of legs when injected intracerebroventricularly in mice at a dose of 2.0 ug. The chain is Delta-amaurobitoxin-Pl1b from Pireneitega luctuosa (Tangled nest spider).